The chain runs to 817 residues: Endoplasmin homolog (817 aa).

The first 20 residues, 1–20 (MRKWTVPSVLFLLCPSLSSS), serve as a signal peptide directing secretion. Residues 31 to 58 (EADSDAPVDPPKVEDKIGAVPNGLSTDS) are disordered. 4 residues coordinate ATP: N111, D155, N168, and F200. N111 carries an N-linked (GlcNAc...) asparagine glycan. Positions 293–325 (VPAEEDDSSDDEDNKSESSSSEEGEEEETEKEE) are enriched in acidic residues. The tract at residues 293–333 (VPAEEDDSSDDEDNKSESSSSEEGEEEETEKEEDEKKPKTK) is disordered. N306, N416, N456, and N624 each carry an N-linked (GlcNAc...) asparagine glycan. The disordered stretch occupies residues 777-817 (SPDATVEEEDDTEEAEAESGTTESSAAEDAGAETLDLKDEL). Positions 781 to 793 (TVEEEDDTEEAEA) are enriched in acidic residues. The segment covering 794–805 (ESGTTESSAAED) has biased composition (low complexity). The Prevents secretion from ER motif lies at 814–817 (KDEL).

Belongs to the heat shock protein 90 family. Not detected in extracts from young plants unless they are exposed to heat shock for several hours. Found to be constitutively expressed in cell cultures.

It is found in the endoplasmic reticulum lumen. In terms of biological role, may have a molecular chaperone role in the processing of secreted materials. The polypeptide is Endoplasmin homolog (HSP90) (Catharanthus roseus (Madagascar periwinkle)).